A 564-amino-acid chain; its full sequence is Eukaryotic translation initiation factor 3 subunit L (564 aa).

At Ser-2 the chain carries N-acetylserine. Residue Ser-21 is modified to Phosphoserine. Positions 331 to 537 (DAIRVFANIL…IHIADTKVAR (207 aa)) constitute a PCI domain. An N6-acetyllysine mark is found at Lys-465 and Lys-549.

Belongs to the eIF-3 subunit L family. As to quaternary structure, component of the eukaryotic translation initiation factor 3 (eIF-3) complex, which is composed of 13 subunits: EIF3A, EIF3B, EIF3C, EIF3D, EIF3E, EIF3F, EIF3G, EIF3H, EIF3I, EIF3J, EIF3K, EIF3L and EIF3M. The eIF-3 complex appears to include 3 stable modules: module A is composed of EIF3A, EIF3B, EIF3G and EIF3I; module B is composed of EIF3F, EIF3H, and EIF3M; and module C is composed of EIF3C, EIF3D, EIF3E, EIF3K and EIF3L. EIF3C of module C binds EIF3B of module A and EIF3H of module B, thereby linking the three modules. EIF3J is a labile subunit that binds to the eIF-3 complex via EIF3B. The eIF-3 complex interacts with RPS6KB1 under conditions of nutrient depletion. Mitogenic stimulation leads to binding and activation of a complex composed of MTOR and RPTOR, leading to phosphorylation and release of RPS6KB1 and binding of EIF4B to eIF-3. Interacts with RRN3.

The protein resides in the cytoplasm. Functionally, component of the eukaryotic translation initiation factor 3 (eIF-3) complex, which is required for several steps in the initiation of protein synthesis. The eIF-3 complex associates with the 40S ribosome and facilitates the recruitment of eIF-1, eIF-1A, eIF-2:GTP:methionyl-tRNAi and eIF-5 to form the 43S pre-initiation complex (43S PIC). The eIF-3 complex stimulates mRNA recruitment to the 43S PIC and scanning of the mRNA for AUG recognition. The eIF-3 complex is also required for disassembly and recycling of post-termination ribosomal complexes and subsequently prevents premature joining of the 40S and 60S ribosomal subunits prior to initiation. The eIF-3 complex specifically targets and initiates translation of a subset of mRNAs involved in cell proliferation, including cell cycling, differentiation and apoptosis, and uses different modes of RNA stem-loop binding to exert either translational activation or repression. In Pan troglodytes (Chimpanzee), this protein is Eukaryotic translation initiation factor 3 subunit L.